The sequence spans 454 residues: Toxin CfTX-A (454 aa).

The first 18 residues, 1–18 (MDYAFIVFLVCFVSGTLG), serve as a signal peptide directing secretion. A propeptide spanning residues 19 to 25 (NRRRAKR) is cleaved from the precursor. Residues 27–61 (VDEVTSGINQLVNQLNNVQQDTAAIKSALEELKTE) adopt a coiled-coil conformation.

The protein belongs to the jellyfish toxin family. Type II subfamily. As to quaternary structure, oligomer. Contains 2 disulfide bonds. As to expression, nematocytes.

It localises to the secreted. The protein resides in the nematocyst. It is found in the target cell membrane. In terms of biological role, the fraction containing this toxin and CfTX-A shows potent hemolytic activity. This fraction causes minor effects on the cardiovascular system of anesthetized rats (at 25 ug/kg), since it has no significant effects on heart rate but produces relatively small increases in mean arterial pressure. In Chironex fleckeri (Australian box jellyfish), this protein is Toxin CfTX-A.